Reading from the N-terminus, the 1006-residue chain is Transmembrane channel-like protein 5 (1006 aa).

The interval 1–289 (MSAYYRNNWS…DDPVGSLWGE (289 aa)) is disordered. The Extracellular portion of the chain corresponds to 1–458 (MSAYYRNNWS…YFNFLRWLLK (458 aa)). 3 stretches are compositionally biased toward polar residues: residues 20–30 (SGSQNRTQGYL), 50–59 (TRSNPYSVAS), and 76–101 (RSLS…SPDH). Over residues 138–149 (AGSSSSGNYAGS) the composition is skewed to low complexity. Over residues 239-250 (REPDYSDAENGH) the composition is skewed to basic and acidic residues. The chain crosses the membrane as a helical span at residues 459–479 (FNIFSFILNFSFIIIPQFTVA). Residues 480-485 (KKNTLQ) are Cytoplasmic-facing. The helical transmembrane segment at 486–508 (FTGLEFFTGVGYFRDTVMYYGFY) threads the bilayer. The Extracellular portion of the chain corresponds to 509–525 (TNSTIQHGNSGASYNMQ). Residues 526 to 546 (LAYIFTIGACLTTCFFSLLFS) form a helical membrane-spanning segment. Topologically, residues 547 to 619 (MAKYFRNNFI…NQLLTRFSAY (73 aa)) are cytoplasmic. The helical transmembrane segment at 620–640 (MVAWVVSTGVAIACCAAVYYL) threads the bilayer. At 641–654 (AEYNLEFLKTHSNP) the chain is on the extracellular side. The helical transmembrane segment at 655–675 (GAVLLLPFVVSCINLAVPCIY) threads the bilayer. Topologically, residues 676–698 (SMFRLVERYEMPRHEVYVLLIRN) are cytoplasmic. The chain crosses the membrane as a helical span at residues 699-719 (IFLKISIIGILCYYWLNTVAL). Topologically, residues 720–732 (SGEECWETLIGQD) are extracellular. A helical transmembrane segment spans residues 733 to 753 (IYRLLLMDFVFSLVNSFLGEF). Topologically, residues 754–786 (LRRIIGMQLITSLGLQEFDIARNVLELIYAQTL) are cytoplasmic. The helical transmembrane segment at 787–807 (VWIGIFFCPLLPFIQMIMLFI) threads the bilayer. Residues 808 to 835 (MFYSKNISLMMNFQPPSKAWRASQMMTF) are Extracellular-facing. A helical membrane pass occupies residues 836–856 (FIFLLFFPSFTGVLCTLAITI). The Cytoplasmic portion of the chain corresponds to 857–900 (WRLKPSADCGPFRGLPLFIHSIYSWIDTLSTRPGYLWVVWIYRN). A helical membrane pass occupies residues 901-921 (LIGSVHFFFILTLIVLIITYL). Over 922–1006 (YWQITEGRKI…RSVQEGNPRA (85 aa)) the chain is Extracellular.

This sequence belongs to the TMC family.

It localises to the membrane. Its function is as follows. Probable component of an ion channel. Molecular function hasn't been characterized yet. The chain is Transmembrane channel-like protein 5 from Homo sapiens (Human).